Here is a 561-residue protein sequence, read N- to C-terminus: Potassium-transporting ATPase potassium-binding subunit (561 aa).

A run of 11 helical transmembrane segments spans residues 5–25 (LAAG…YVPL), 60–80 (CGYA…LYVL), 86–106 (VLPL…NTAV), 131–151 (GLAV…VALI), 177–197 (ILLP…VIQS), 247–267 (PTPL…VALT), 281–301 (LTVL…TTAA), 376–396 (GLYG…LLVG), 415–435 (ALAV…TVVL), 489–509 (LGLC…ALAG), and 531–551 (FAGL…FPVL).

The protein belongs to the KdpA family. In terms of assembly, the system is composed of three essential subunits: KdpA, KdpB and KdpC.

It localises to the cell membrane. Functionally, part of the high-affinity ATP-driven potassium transport (or Kdp) system, which catalyzes the hydrolysis of ATP coupled with the electrogenic transport of potassium into the cytoplasm. This subunit binds the extracellular potassium ions and delivers the ions to the membrane domain of KdpB through an intramembrane tunnel. In Nocardia farcinica (strain IFM 10152), this protein is Potassium-transporting ATPase potassium-binding subunit.